Here is a 104-residue protein sequence, read N- to C-terminus: Large ribosomal subunit protein bL21c (104 aa).

The protein belongs to the bacterial ribosomal protein bL21 family. As to quaternary structure, part of the 50S ribosomal subunit.

It localises to the plastid. It is found in the chloroplast. Functionally, this protein binds to 23S rRNA. This is Large ribosomal subunit protein bL21c from Porphyra purpurea (Red seaweed).